A 206-amino-acid chain; its full sequence is Large ribosomal subunit protein uL4 (206 aa).

The segment at 45 to 76 (RQGNQSAKTRAEVSGGGKKPWRQKGTGRARQG) is disordered.

Belongs to the universal ribosomal protein uL4 family. In terms of assembly, part of the 50S ribosomal subunit.

Its function is as follows. One of the primary rRNA binding proteins, this protein initially binds near the 5'-end of the 23S rRNA. It is important during the early stages of 50S assembly. It makes multiple contacts with different domains of the 23S rRNA in the assembled 50S subunit and ribosome. Forms part of the polypeptide exit tunnel. This is Large ribosomal subunit protein uL4 from Clostridium novyi (strain NT).